We begin with the raw amino-acid sequence, 312 residues long: Ribosomal RNA small subunit methyltransferase H (312 aa).

S-adenosyl-L-methionine contacts are provided by residues 33–35 (GGH), aspartate 52, phenylalanine 81, aspartate 102, and glutamine 109.

The protein belongs to the methyltransferase superfamily. RsmH family.

Its subcellular location is the cytoplasm. It carries out the reaction cytidine(1402) in 16S rRNA + S-adenosyl-L-methionine = N(4)-methylcytidine(1402) in 16S rRNA + S-adenosyl-L-homocysteine + H(+). Its function is as follows. Specifically methylates the N4 position of cytidine in position 1402 (C1402) of 16S rRNA. The sequence is that of Ribosomal RNA small subunit methyltransferase H from Leuconostoc mesenteroides subsp. mesenteroides (strain ATCC 8293 / DSM 20343 / BCRC 11652 / CCM 1803 / JCM 6124 / NCDO 523 / NBRC 100496 / NCIMB 8023 / NCTC 12954 / NRRL B-1118 / 37Y).